Reading from the N-terminus, the 456-residue chain is MIKRQKLKYKWMLITTLITFTTILLFCLIIIFFLKDTLRSSEIDEAERSSNDIANLFHSKSLSDISALDLNASLENFQEILIYDDKGRKLIQTSNDNTLAYDNKIDFKHPERIHIHRSHGINYLVITEPIRSKEFSGYSVLVHSLQNYDNLVKSLYIVALAFGLIATIITAGVSYIFSSQITKPIVTMSNKMNQIRRDGFQNKLELTTNYEETDNLIDTFNEMMYQIEESFNQQRQFVEDASHELRTPLQIIQGHLNLIQRWGKKDPAVLEESLNISIEEVNRITKLVEELLLLTKDRVNHNVLECENVDINSEIQSRVKSLQHLHPDYTFETHLATKPIQLKINRHQFEQLLLIFIDNAMKYDTEHKHIKIVTQLKNKMIMIDITDHGMGIPKADLEFIFDRFYRVDKSRARSQGGNGLGLSIAEKIVQLNGGMIQVESELQNYTTFKISFPVLN.

2 helical membrane passes run Leu13 to Phe33 and Ile157 to Phe177. The 54-residue stretch at Ser179–Asn232 folds into the HAMP domain. In terms of domain architecture, Histidine kinase spans Asp240–Asn456. Residue His243 is modified to Phosphohistidine; by autocatalysis.

Post-translationally, autophosphorylated.

It localises to the cell membrane. It carries out the reaction ATP + protein L-histidine = ADP + protein N-phospho-L-histidine.. Its function is as follows. Member of the two-component regulatory system ArlS/ArlR. ArlS probably functions as a sensor protein kinase which is autophosphorylated at a histidine residue and transfers its phosphate group to ArlR. The chain is Signal transduction histidine-protein kinase ArlS (arlS) from Staphylococcus epidermidis (strain ATCC 35984 / DSM 28319 / BCRC 17069 / CCUG 31568 / BM 3577 / RP62A).